A 745-amino-acid polypeptide reads, in one-letter code: Pentatricopeptide repeat-containing protein At1g71420 (745 aa).

13 PPR repeats span residues serine 58–histidine 88, asparagine 95–arginine 125, asparagine 126–asparagine 160, serine 191–lysine 224, asparagine 225–phenylalanine 259, aspartate 260–serine 296, glutamine 301–cysteine 332, aspartate 334–proline 367, aspartate 368–alanine 402, aspartate 403–serine 437, tryptophan 438–asparagine 464, aspartate 466–lysine 496, and glutamine 502–aspartate 532. Residues valine 537–glycine 613 form a type E motif region. Positions asparagine 614–lysine 644 are type E(+) motif. The type DYW motif stretch occupies residues glutamate 645–tryptophan 745.

This sequence belongs to the PPR family. PCMP-H subfamily.

This chain is Pentatricopeptide repeat-containing protein At1g71420 (PCMP-H70), found in Arabidopsis thaliana (Mouse-ear cress).